Here is a 150-residue protein sequence, read N- to C-terminus: Urease accessory protein UreE (150 aa).

It belongs to the UreE family.

The protein localises to the cytoplasm. Functionally, involved in urease metallocenter assembly. Binds nickel. Probably functions as a nickel donor during metallocenter assembly. The polypeptide is Urease accessory protein UreE (Streptococcus salivarius (strain 57.I)).